The primary structure comprises 560 residues: Membrane protein insertase YidC (560 aa).

The next 6 membrane-spanning stretches (helical) occupy residues 5 to 25, 334 to 354, 357 to 377, 431 to 451, 476 to 496, and 522 to 542; these read IINLIAAIILSLSIIFGWQYF, AIDFGWFYIITKPVFYAMNFF, YVGNFGVSILIVTVIIKLLMF, LPILVQIPVFFSIYKVLYVTI, LFGLLPFSPPSFLMIGAWPIL, and FMPLIFLFMFSSFPVGLLIYW.

The protein belongs to the OXA1/ALB3/YidC family. Type 1 subfamily. As to quaternary structure, interacts with the Sec translocase complex via SecD. Specifically interacts with transmembrane segments of nascent integral membrane proteins during membrane integration.

It is found in the cell inner membrane. Its function is as follows. Required for the insertion and/or proper folding and/or complex formation of integral membrane proteins into the membrane. Involved in integration of membrane proteins that insert both dependently and independently of the Sec translocase complex, as well as at least some lipoproteins. Aids folding of multispanning membrane proteins. This chain is Membrane protein insertase YidC, found in Rickettsia conorii (strain ATCC VR-613 / Malish 7).